A 141-amino-acid chain; its full sequence is ATP synthase F(0) complex subunit C3, mitochondrial (141 aa).

Residues 1-66 constitute a mitochondrion transit peptide; that stretch reads MFACAKLACT…REFQTTAVNR (66 aa). The chain crosses the membrane as a helical span at residues 82–102; sequence VGVAGSGAGIGTVFGSLIIGY. Residue lysine 109 is modified to N6,N6,N6-trimethyllysine. Residues 117-137 traverse the membrane as a helical segment; that stretch reads ILGFALSEAMGLFCLMVAFLI.

It belongs to the ATPase C chain family. As to quaternary structure, F-type ATPases have 2 components, CF(1) - the catalytic core - and CF(0) - the membrane proton channel. CF(1) has five subunits: alpha(3), beta(3), gamma(1), delta(1), epsilon(1). CF(0) has three main subunits: a, b and c. Interacts with TMEM70 and TMEM242. Trimethylated by ATPSCKMT at Lys-109. Methylation is required for proper incorporation of the C subunit into the ATP synthase complex and mitochondrial respiration.

Its subcellular location is the mitochondrion membrane. Mitochondrial membrane ATP synthase (F(1)F(0) ATP synthase or Complex V) produces ATP from ADP in the presence of a proton gradient across the membrane which is generated by electron transport complexes of the respiratory chain. F-type ATPases consist of two structural domains, F(1) - containing the extramembraneous catalytic core and F(0) - containing the membrane proton channel, linked together by a central stalk and a peripheral stalk. During catalysis, ATP synthesis in the catalytic domain of F(1) is coupled via a rotary mechanism of the central stalk subunits to proton translocation. Part of the complex F(0) domain. A homomeric c-ring of probably 10 subunits is part of the complex rotary element. This Bos taurus (Bovine) protein is ATP synthase F(0) complex subunit C3, mitochondrial.